Here is a 112-residue protein sequence, read N- to C-terminus: MAM and fibronectin type III domain-containing protein 2 (112 aa).

Component of the acid-insoluble and acid-soluble organic matrix of the aragonitic skeleton (at protein level).

It localises to the secreted. This chain is MAM and fibronectin type III domain-containing protein 2, found in Acropora millepora (Staghorn coral).